Here is a 229-residue protein sequence, read N- to C-terminus: Sugar fermentation stimulation protein homolog (229 aa).

It belongs to the SfsA family.

This chain is Sugar fermentation stimulation protein homolog, found in Carboxydothermus hydrogenoformans (strain ATCC BAA-161 / DSM 6008 / Z-2901).